A 92-amino-acid chain; its full sequence is MKCGVLFMISCLLITFLVLSHVREVESKTKWGCDMNRPFPGKCGTNGKDTCISDIKKMPGAPKDLVVRCECSQRFVWKGYPPERLCKCQYDC.

Residues 1–27 (MKCGVLFMISCLLITFLVLSHVREVES) form the signal peptide. 4 disulfide bridges follow: Cys-33–Cys-92, Cys-43–Cys-71, Cys-51–Cys-86, and Cys-69–Cys-88.

The protein belongs to the DEFL family.

It is found in the secreted. In Arabidopsis thaliana (Mouse-ear cress), this protein is Defensin-like protein 226 (SCRL2).